The following is a 202-amino-acid chain: Peptidyl-tRNA hydrolase (202 aa).

Tyrosine 19 serves as a coordination point for tRNA. Residue histidine 24 is the Proton acceptor of the active site. Tyrosine 70, asparagine 72, and asparagine 118 together coordinate tRNA.

It belongs to the PTH family. As to quaternary structure, monomer.

The protein localises to the cytoplasm. The catalysed reaction is an N-acyl-L-alpha-aminoacyl-tRNA + H2O = an N-acyl-L-amino acid + a tRNA + H(+). Hydrolyzes ribosome-free peptidyl-tRNAs (with 1 or more amino acids incorporated), which drop off the ribosome during protein synthesis, or as a result of ribosome stalling. Its function is as follows. Catalyzes the release of premature peptidyl moieties from peptidyl-tRNA molecules trapped in stalled 50S ribosomal subunits, and thus maintains levels of free tRNAs and 50S ribosomes. The chain is Peptidyl-tRNA hydrolase from Prochlorococcus marinus (strain NATL2A).